The primary structure comprises 609 residues: Indole-3-acetic acid-amido synthetase GH3.17 (609 aa).

Belongs to the IAA-amido conjugating enzyme family.

Functionally, catalyzes the synthesis of indole-3-acetic acid (IAA)-amino acid conjugates, providing a mechanism for the plant to cope with the presence of excess auxin. Strongly reactive with Glu, Gln, Trp, Asp, Ala, Leu, Phe, Gly, Tyr, Met, Ile and Val. Appears to favor Glu over Asp while the other GH3 favor Asp over Glu. Little or no product formation with His, Ser, Thr, Arg, Lys, or Cys. Also active on pyruvic and butyric acid analogs of IAA, PAA and the synthetic auxin naphthaleneacetic acid (NAA). The two chlorinated synthetic auxin herbicides 2,4-D and 3,6-dichloro-o-anisic acid (dicamba) cannot be used as substrates. The chain is Indole-3-acetic acid-amido synthetase GH3.17 (GH3.17) from Arabidopsis thaliana (Mouse-ear cress).